A 388-amino-acid polypeptide reads, in one-letter code: Ribonucleoside-diphosphate reductase subunit beta (388 aa).

Fe cation contacts are provided by D84, E115, and H118. The active site involves Y122. Residues E212, E247, and H250 each contribute to the Fe cation site.

Belongs to the ribonucleoside diphosphate reductase small chain family. Heterodimer of a large and a small subunit. Requires Fe cation as cofactor.

The catalysed reaction is a 2'-deoxyribonucleoside 5'-diphosphate + [thioredoxin]-disulfide + H2O = a ribonucleoside 5'-diphosphate + [thioredoxin]-dithiol. In terms of biological role, provides the precursors necessary for DNA synthesis. Catalyzes the biosynthesis of deoxyribonucleotides from the corresponding ribonucleotides. This chain is Ribonucleoside-diphosphate reductase subunit beta (NRDB), found in Escherichia coli (Bacteriophage T4).